The primary structure comprises 489 residues: Protein translocase subunit SecY (489 aa).

The Cytoplasmic portion of the chain corresponds to 1 to 20; the sequence is MGWKDAAEPVLSRMPAVARP. The helical transmembrane segment at 21–47 threads the bilayer; sequence EGHVPFRRKLGWTGGILVLYFFLTNVT. Over 48-59 the chain is Extracellular; the sequence is LFGLDAATANDL. An intramembrane region (helical) is located at residues 60–67; the sequence is FGQFRSIL. A discontinuously helical membrane pass occupies residues 60 to 88; the sequence is FGQFRSILAGQQGSVLQLGIGPIVTASIV. Residues 68-79 lie within the membrane without spanning it; the sequence is AGQQGSVLQLGI. The helical intramembrane region spans 80–88; the sequence is GPIVTASIV. At 89 to 110 the chain is on the cytoplasmic side; sequence LQLLGGADLLGLDTDNNPRDQV. Residues 111–135 form a helical membrane-spanning segment; it reads LYQGLQKLLVGVMICLTGLPMVFAG. Residues 136–153 are Extracellular-facing; the sequence is NFLPADQAVATSLGIGTV. The helical transmembrane segment at 154–178 threads the bilayer; that stretch reads GVKGLIFAQIAVGGVLILFMDEIVS. Residues 179–184 lie on the Cytoplasmic side of the membrane; sequence KWGVGS. A helical transmembrane segment spans residues 185–203; the sequence is GVGLFIIAGVSQQLVGGLF. Residues 204–244 are Extracellular-facing; the sequence is SWQGLGGTSGFFATWIGIITGAIELPASPTDLLSTVFLGQG. The helical transmembrane segment at 245-266 threads the bilayer; sequence QLLALITTLLIFGIVVYAESVR. At 267–291 the chain is on the cytoplasmic side; sequence VEIPLSHARVKGARGRFPVKLIYAS. The chain crosses the membrane as a helical span at residues 292-313; that stretch reads VLPMILVRALQANIQFLGRFLN. Residues 314–364 lie on the Extracellular side of the membrane; the sequence is SSWVGMPAWLGQYTSGQVTGGLLYYLAPIQSRSDWMWFLGLTSADPLDIAI. The chain crosses the membrane as a helical span at residues 365–384; the sequence is RVLIDLIFMIVGGAVFAIFW. Over 385–427 the chain is Cytoplasmic; the sequence is VETTGMGPKSTAQQIQNSGMQIPGFRRNPQVIERVMERYIPQV. The chain crosses the membrane as a helical span at residues 428–446; sequence TVIGGALVGLLAVMANMLG. The Extracellular segment spans residues 447–450; the sequence is TIGA. A helical membrane pass occupies residues 451–465; the sequence is VSGTGLLLTVSITYK. Topologically, residues 466-488 are cytoplasmic; that stretch reads LYEEIAEEQLMEMHPMMRNMFGS.

This sequence belongs to the SecY/SEC61-alpha family. Component of the Sec protein translocase complex. Heterotrimer consisting of alpha (SecY), beta (SecG) and gamma (SecE) subunits. The heterotrimers can form oligomers, although 1 heterotrimer is thought to be able to translocate proteins. Interacts with the ribosome. May interact with SecDF, and other proteins may be involved.

Its subcellular location is the cell membrane. In terms of biological role, the central subunit of the protein translocation channel SecYEG. Consists of two halves formed by TMs 1-5 and 6-10. These two domains form a lateral gate at the front which open onto the bilayer between TMs 2 and 7, and are clamped together by SecE at the back. The channel is closed by both a pore ring composed of hydrophobic SecY resides and a short helix (helix 2A) on the extracellular side of the membrane which forms a plug. The plug probably moves laterally to allow the channel to open. The ring and the pore may move independently. The sequence is that of Protein translocase subunit SecY from Haloferax volcanii (strain ATCC 29605 / DSM 3757 / JCM 8879 / NBRC 14742 / NCIMB 2012 / VKM B-1768 / DS2) (Halobacterium volcanii).